The chain runs to 367 residues: MASNSFGHLFKMTTWGESHGKAMGVVIDGCPSGIFLTEQDINQELYWRKPGRNELTSPRLEEDQVEILSGLFNGQTTGAPISLIIWNKDVNSSAYEGMHTLFRPGHANYTYSNKYGIFDYRGGGRASARETVCRVAAGAIAKKILSDVGISVVAYLYSIGEIEGKIELSDHVNNVPLLQQTIRNSSLFSPSPAAEKMKGVLEEARKEGDSVGGIVEAMAFNVPCGWGDPVYEKLEANLAKAMLSIPASKGFEIGEGFKASQMRGTEHNDLFGIQNDQISFVTNHAGGTLGGISTGEPIIIKVPFKPTSSINKVQTSLNEKGEICDYRLPTGSRHDPCVAIRAVPVVEAMMALVLVDAFLMSKFCQLN.

Residue R48 participates in NADP(+) binding. Residues 125–127, G290, 305–309, and R333 each bind FMN; these read RAS and KPTSS.

This sequence belongs to the chorismate synthase family. In terms of assembly, homotetramer. Requires FMNH2 as cofactor.

The catalysed reaction is 5-O-(1-carboxyvinyl)-3-phosphoshikimate = chorismate + phosphate. It participates in metabolic intermediate biosynthesis; chorismate biosynthesis; chorismate from D-erythrose 4-phosphate and phosphoenolpyruvate: step 7/7. Its function is as follows. Catalyzes the anti-1,4-elimination of the C-3 phosphate and the C-6 proR hydrogen from 5-enolpyruvylshikimate-3-phosphate (EPSP) to yield chorismate, which is the branch point compound that serves as the starting substrate for the three terminal pathways of aromatic amino acid biosynthesis. This reaction introduces a second double bond into the aromatic ring system. The chain is Chorismate synthase from Protochlamydia amoebophila (strain UWE25).